We begin with the raw amino-acid sequence, 811 residues long: RFX-like DNA-binding protein RFX1 (811 aa).

Disordered regions lie at residues 48 to 92 and 111 to 156; these read EPTS…TYLP and LLHQ…QRQP. The span at 51–70 shows a compositional bias: low complexity; the sequence is SRGSNDNSNGPSNGSSVNSN. Pro residues predominate over residues 140 to 149; sequence SPTPTQPPAQ. The residue at position 173 (serine 173) is a Phosphoserine. The interval 181-222 is disordered; sequence KSEETLNNNPPTAAKRTNTFPSIPSSTKKQKTSQEKRISSIS. Residues 185 to 204 are compositionally biased toward polar residues; sequence TLNNNPPTAAKRTNTFPSIP. Residues 285–360 constitute a DNA-binding region (RFX-type winged-helix); sequence ALLWLMKNCK…YHYCGLKLTV (76 aa). The segment covering 377 to 391 has biased composition (low complexity); sequence LVHNNDPISPLSSPS. The tract at residues 377–461 is disordered; sequence LVHNNDPISP…AANNPTGTLS (85 aa). A compositionally biased stretch (polar residues) spans 409-428; the sequence is NRKSLSRTGSPVKQSSNDNP. A compositionally biased stretch (basic and acidic residues) spans 434 to 445; it reads ESQHPNETEANK.

The protein belongs to the RFX family.

In Saccharomyces cerevisiae (strain ATCC 204508 / S288c) (Baker's yeast), this protein is RFX-like DNA-binding protein RFX1 (RFX1).